Here is a 308-residue protein sequence, read N- to C-terminus: Putative mitochondrial transporter UCP3 (308 aa).

Residues 1–10 (MVGLQPSEVP) lie on the Mitochondrial intermembrane side of the membrane. Residues 11–32 (PTTVVKFLGAGTAACFADLLTF) form a helical membrane-spanning segment. Solcar repeat units follow at residues 11–102 (PTTV…VKQF), 111–202 (SSVA…IKEK), and 211–296 (DNFP…LKRA). Over 33 to 73 (PLDTAKVRLQIQGENPGAQSVQYRGVLGTILTMVRTEGPRS) the chain is Mitochondrial matrix. Residues 74 to 96 (PYSGLVAGLHRQMSFASIRIGLY) form a helical membrane-spanning segment. Over 97–116 (DSVKQFYTPKGADHSSVAIR) the chain is Mitochondrial intermembrane. The chain crosses the membrane as a helical span at residues 117–133 (ILAGCTTGAMAVTCAQP). Residues 134-179 (TDVVKVRFQAMIRLGTGGERKYRGTMDAYRTIAREEGVRGLWKGTW) are Mitochondrial matrix-facing. The helical transmembrane segment at 180-196 (PNITRNAIVNCAEMVTY) threads the bilayer. The Mitochondrial intermembrane segment spans residues 197–213 (DIIKEKLLESHLFTDNF). Residues 214-233 (PCHFVSAFGAGFCATVVASP) traverse the membrane as a helical segment. Residues 234–267 (VDVVKTRYMNAPLGRYRSPLHCMLKMVAQEGPTA) lie on the Mitochondrial matrix side of the membrane. Residues 268–290 (FYKGFVPSFLRLGAWNVMMFVTY) traverse the membrane as a helical segment. Positions 275 to 297 (SFLRLGAWNVMMFVTYEQLKRAL) are purine nucleotide binding. The Mitochondrial intermembrane portion of the chain corresponds to 291-308 (EQLKRALMKVQVLRESPF).

It belongs to the mitochondrial carrier (TC 2.A.29) family. Interacts with HAX1; the interaction is direct and calcium-dependent.

The protein resides in the mitochondrion inner membrane. With respect to regulation, inhibited by purine nucleotides and inorganic phosphate (in vitro). In terms of biological role, putative transmembrane transporter that plays a role in mitochondrial metabolism via an as yet unclear mechanism. Originally, this mitochondrial protein was thought to act as a proton transmembrane transporter from the mitochondrial intermembrane space into the matrix, causing proton leaks through the inner mitochondrial membrane, thereby uncoupling mitochondrial membrane potential generation from ATP synthesis. However, this function is controversial and uncoupling may not be the function, or at least not the main function, but rather a consequence of more conventional metabolite transporter activity. The chain is Putative mitochondrial transporter UCP3 from Mus musculus (Mouse).